We begin with the raw amino-acid sequence, 627 residues long: MSATQKNNITRLEQLDRQSTQPFPNSRKVYLTGSRPDIRVPVREISLADTPTAFGGEKNPPVFVYDTSGPYTDPEVRIDLRKGLPDVRSRWIDERGDTEILPGLTSEFGQARLADASLDALRFAHVRTPRRAKPGANVSQMHYAKKGIITPEMEYIAIRENMKLQEARAAGLLDQQHPGHSFGANIPKEITPEFVREEVARGRAIIPANINHTELEPMIIGRNFLVKINGNIGNSALGSSIEEEVEKLTWGIRWGADTVMDLSTGKHIHETREWILRNSPVPIGTVPIYQALEKVNGVAEDLTWEIFRDTLIEQAEQGVDYFTIHAGVLLRYVPLTAKRVTGIVSRGGSIMAKWCLAHHKENFLYTHFEEICEIMKAYDVSFSLGDGLRPGSVADANDAAQFGELETLGELTKIAWKHDVQVMIEGPGHVPMQLIKENMDKQLECCDEAPFYTLGPLTTDIAPGYDHITSGIGAAMIGWFGCAMLCYVTPKEHLGLPNKDDVKTGIITYKIAAHAADLAKGHPGAQIRDNALSKARFEFRWEDQFNLGLDPDTARAFHDETLPKDSAKVAHFCSMCGPKFCSMKITQEVRDYAKENGLSDESKAIEAGFQEQAARFKDEGSVIYKQV.

Positions 1–24 are enriched in polar residues; the sequence is MSATQKNNITRLEQLDRQSTQPFP. Residues 1-29 form a disordered region; that stretch reads MSATQKNNITRLEQLDRQSTQPFPNSRKV. Substrate is bound by residues N231, M260, Y289, H325, 345-347, 386-389, and E425; these read SRG and DGLR. Position 429 (H429) interacts with Zn(2+). Y452 lines the substrate pocket. H493 contacts Zn(2+). 3 residues coordinate [4Fe-4S] cluster: C573, C576, and C581.

It belongs to the ThiC family. As to quaternary structure, homodimer. [4Fe-4S] cluster serves as cofactor.

It carries out the reaction 5-amino-1-(5-phospho-beta-D-ribosyl)imidazole + S-adenosyl-L-methionine = 4-amino-2-methyl-5-(phosphooxymethyl)pyrimidine + CO + 5'-deoxyadenosine + formate + L-methionine + 3 H(+). It functions in the pathway cofactor biosynthesis; thiamine diphosphate biosynthesis. In terms of biological role, catalyzes the synthesis of the hydroxymethylpyrimidine phosphate (HMP-P) moiety of thiamine from aminoimidazole ribotide (AIR) in a radical S-adenosyl-L-methionine (SAM)-dependent reaction. The polypeptide is Phosphomethylpyrimidine synthase (Pseudomonas paraeruginosa (strain DSM 24068 / PA7) (Pseudomonas aeruginosa (strain PA7))).